The following is a 174-amino-acid chain: Sarcoplasmic calcium-binding protein (174 aa).

N-acetylserine is present on serine 1. 4 EF-hand domains span residues 3–38, 55–90, 91–126, and 125–160; these read LWVQ…FAKE, GVWD…NAKA, VVEG…LGLN, and LNPD…FFIN. Positions 16, 18, 20, and 27 each coordinate Ca(2+). Ca(2+)-binding residues include aspartate 104, asparagine 106, aspartate 108, methionine 110, glutamate 115, aspartate 138, asparagine 140, aspartate 142, and glutamate 149.

Its function is as follows. Like parvalbumins, SCPs seem to be more abundant in fast contracting muscles, but no functional relationship can be established from this distribution. The polypeptide is Sarcoplasmic calcium-binding protein (Perinereis vancaurica tetradentata (Sandworm)).